The chain runs to 343 residues: Uroporphyrinogen decarboxylase (343 aa).

Substrate is bound by residues 23 to 27 (RQAGR), aspartate 73, tyrosine 150, serine 205, and histidine 322.

This sequence belongs to the uroporphyrinogen decarboxylase family. Homodimer.

The protein resides in the cytoplasm. The enzyme catalyses uroporphyrinogen III + 4 H(+) = coproporphyrinogen III + 4 CO2. Its pathway is porphyrin-containing compound metabolism; protoporphyrin-IX biosynthesis; coproporphyrinogen-III from 5-aminolevulinate: step 4/4. In terms of biological role, catalyzes the decarboxylation of four acetate groups of uroporphyrinogen-III to yield coproporphyrinogen-III. This Cereibacter sphaeroides (strain ATCC 17025 / ATH 2.4.3) (Rhodobacter sphaeroides) protein is Uroporphyrinogen decarboxylase.